We begin with the raw amino-acid sequence, 263 residues long: Putative steroid dehydrogenase 4 (263 aa).

Tyr-154 serves as the catalytic Proton acceptor.

Belongs to the short-chain dehydrogenases/reductases (SDR) family. 17-beta-HSD 3 subfamily.

This Caenorhabditis elegans protein is Putative steroid dehydrogenase 4 (stdh-4).